A 478-amino-acid chain; its full sequence is Transposase for insertion sequence element IS231B (478 aa).

It belongs to the transposase 11 family.

In terms of biological role, involved in the transposition of the insertion sequence. The sequence is that of Transposase for insertion sequence element IS231B from Bacillus thuringiensis subsp. berliner.